A 198-amino-acid polypeptide reads, in one-letter code: Cyclin-dependent kinase inhibitor 1B (198 aa).

The segment covering 1–12 (MSNVRVSNGSPT) has biased composition (polar residues). Positions 1 to 30 (MSNVRVSNGSPTSERRDAKQAEYPKPSACR) are disordered. At S10 the chain carries Phosphoserine; by UHMK1. Residues 13–22 (SERRDAKQAE) show a composition bias toward basic and acidic residues. The interaction with CDK2 stretch occupies residues 51-91 (DMEEASQNKWNFDFQNHKPLEGKYEWQEVEKGSLPEFYYRP). Y74 carries the phosphotyrosine; by SRC modification. The tract at residues 87–198 (FYYRPPRPPK…KKPGLRRRQT (112 aa)) is disordered. Y88 carries the phosphotyrosine; by ABL, LYN and SRC modification. Phosphotyrosine is present on Y89. Positions 104 to 113 (QESQDVSGTR) are enriched in polar residues. Over residues 126-137 (EDTHLVDQKTDA) the composition is skewed to basic and acidic residues. Positions 153-169 (KRPATDDSSPQNKRANR) match the Nuclear localization signal motif. T157 is subject to Phosphothreonine; by CaMK1, PKB/AKT1 and PIM1. The residue at position 170 (T170) is a Phosphothreonine. Polar residues predominate over residues 175–186 (SDGSPNAGSVEQ). A Phosphothreonine; by PKB/AKT1, CDK1 and CDK2 modification is found at T187. T198 carries the phosphothreonine; by CaMK1, PKB/AKT1, RPS6KA1, RPS6KA3 and PIM1 modification.

Belongs to the CDI family. As to quaternary structure, forms a ternary complex composed of CCNE1, CDK2 and CDKN1B. Interacts directly with CCNE1; the interaction is inhibited by CDK2-dependent phosphorylation on Thr-187. Interacts with COPS5, subunit of the COP9 signalosome complex; the interaction leads to CDKN1B degradation. Interacts with NUP50; the interaction leads to nuclear import and degradation of phosphorylated CDKN1B. Interacts with CCND1 and SNX6. Interacts (Thr-198-phosphorylated form) with 14-3-3 proteins, binds strongly YWHAQ, weakly YWHAE and YWHAH, but not YWHAB nor YWHAZ; the interaction with YWHAQ results in translocation to the cytoplasm. Interacts with AKT1 and LYN; the interactions lead to cytoplasmic mislocation, phosphorylation of CDKN1B and inhibition of cell cycle arrest. Forms a ternary complex with CCNA2 and CDK2; CDKN1B inhibits the kinase activity of CDK2 through conformational rearrangements. Interacts (unphosphorylated form) with CDK2. Forms a complex with CDK2 and SPDYA, but does not directly interact with SPDYA. Forms a ternary complex composed of cyclin D, CDK4 and CDKN1B. Interacts (phosphorylated on Tyr-88 and Tyr-89) with CDK4; the interaction is required for cyclin D and CDK4 complex assembly, induces nuclear translocation and activates the CDK4 kinase activity. Interacts with GRB2. Interacts with PIM1. Identified in a complex with SKP1, SKP2 and CKS1B. Interacts with UHMK1; the interaction leads to cytoplasmic mislocation, phosphorylation of CDKN1B and inhibition of cell cycle arrest. Also interacts with CDK1. Dephosphorylated on Thr-187 by PPM1H, leading to CDKN1B stability. In terms of processing, phosphorylated; phosphorylation occurs on serine, threonine and tyrosine residues. Phosphorylation on Ser-10 is the major site of phosphorylation in resting cells, takes place at the G(0)-G(1) phase and leads to protein stability. Phosphorylation on other sites is greatly enhanced by mitogens, growth factors, cMYC and in certain cancer cell lines. The phosphorylated form found in the cytoplasm is inactivate. Phosphorylation on Thr-198 is required for interaction with 14-3-3 proteins. Phosphorylation on Thr-187, by CDK1 and CDK2 leads to protein ubiquitination and proteasomal degradation. Tyrosine phosphorylation promotes this process. Phosphorylation by PKB/AKT1 can be suppressed by LY294002, an inhibitor of the catalytic subunit of PI3K. Phosphorylation on Tyr-88 and Tyr-89 has no effect on binding CDK2, but is required for binding CDK4. Dephosphorylated on tyrosine residues by G-CSF. Dephosphorylated on Thr-187 by PPM1H, leading to CDKN1B stability. Ubiquitinated; in the cytoplasm by the KPC complex (composed of RNF123/KPC1 and UBAC1/KPC2) and, in the nucleus, by SCF(SKP2). The latter requires prior phosphorylation on Thr-187. Ubiquitinated; by a TRIM21-containing SCF(SKP2)-like complex; leads to its degradation. Post-translationally, subject to degradation in the lysosome. Interaction with SNX6 promotes lysosomal degradation.

Its subcellular location is the nucleus. It is found in the cytoplasm. It localises to the endosome. Functionally, important regulator of cell cycle progression. Inhibits the kinase activity of CDK2 bound to cyclin A, but has little inhibitory activity on CDK2 bound to SPDYA. Involved in G1 arrest. Potent inhibitor of cyclin E- and cyclin A-CDK2 complexes. Forms a complex with cyclin type D-CDK4 complexes and is involved in the assembly, stability, and modulation of CCND1-CDK4 complex activation. Acts either as an inhibitor or an activator of cyclin type D-CDK4 complexes depending on its phosphorylation state and/or stoichometry. The chain is Cyclin-dependent kinase inhibitor 1B (CDKN1B) from Canis lupus familiaris (Dog).